The sequence spans 83 residues: RNA-binding protein Hfq (83 aa).

Residues 11-71 (DVFLNYIRKN…ISTIMPASPV (61 aa)) form the Sm domain.

It belongs to the Hfq family. In terms of assembly, homohexamer.

In terms of biological role, RNA chaperone that binds small regulatory RNA (sRNAs) and mRNAs to facilitate mRNA translational regulation in response to envelope stress, environmental stress and changes in metabolite concentrations. Also binds with high specificity to tRNAs. The polypeptide is RNA-binding protein Hfq (Rhodospirillum rubrum (strain ATCC 11170 / ATH 1.1.1 / DSM 467 / LMG 4362 / NCIMB 8255 / S1)).